A 105-amino-acid polypeptide reads, in one-letter code: ATP-dependent Clp protease adapter protein ClpS (105 aa).

This sequence belongs to the ClpS family. In terms of assembly, binds to the N-terminal domain of the chaperone ClpA.

Involved in the modulation of the specificity of the ClpAP-mediated ATP-dependent protein degradation. The chain is ATP-dependent Clp protease adapter protein ClpS from Aeromonas salmonicida (strain A449).